The following is a 152-amino-acid chain: Flagellar basal-body rod protein FlgC (152 aa).

The protein belongs to the flagella basal body rod proteins family. As to quaternary structure, the basal body constitutes a major portion of the flagellar organelle and consists of four rings (L,P,S, and M) mounted on a central rod. The rod consists of about 26 subunits of FlgG in the distal portion, and FlgB, FlgC and FlgF are thought to build up the proximal portion of the rod with about 6 subunits each.

Its subcellular location is the bacterial flagellum basal body. This is Flagellar basal-body rod protein FlgC (flgC) from Borreliella burgdorferi (strain ATCC 35210 / DSM 4680 / CIP 102532 / B31) (Borrelia burgdorferi).